The following is a 61-amino-acid chain: Large ribosomal subunit protein bL32 (61 aa).

The protein belongs to the bacterial ribosomal protein bL32 family.

In Phytoplasma mali (strain AT), this protein is Large ribosomal subunit protein bL32.